We begin with the raw amino-acid sequence, 901 residues long: Envelope glycoprotein B (901 aa).

Residues 1 to 34 (MRPVRGIARSRILSCSWRGTWTSALTILYLGVYC) form the signal peptide. The Virion surface segment spans residues 35–736 (ESTTVTPTTV…GALVTFVTNP (702 aa)). 3 N-linked (GlcNAc...) asparagine; by host glycosylation sites follow: N53, N60, and N66. 4 disulfides stabilise this stretch: C84/C533, C101/C489, C174/C239, and C331/C380. The tract at residues 141 to 147 (SYKYVTY) is involved in fusion and/or binding to host membrane. N197 carries N-linked (GlcNAc...) asparagine; by host glycosylation. The segment at 226–233 (GSVWLYKE) is involved in fusion and/or binding to host membrane. Residues N270, N289, N328, N372, N398, N406, N436, N537, N571, and N623 are each glycosylated (N-linked (GlcNAc...) asparagine; by host). Cysteines 559 and 596 form a disulfide. Hydrophobic membrane proximal region stretches follow at residues 683–734 (VERV…TFVT) and 714–734 (AVGA…TFVT). A helical membrane pass occupies residues 737–757 (FGAFVVFLFCVGCITLVITVY). Residues 758–901 (RRQRRAMQRP…KLNTEDDVHV (144 aa)) are Intravirion-facing. 2 disordered regions span residues 794 to 813 (GPEG…APYG) and 852 to 901 (DDKK…DVHV). Composition is skewed to basic and acidic residues over residues 852–864 (DDKK…KSSK) and 872–883 (SETRRRPGIMDR). Residues 890 to 893 (YQKL) carry the Internalization motif motif.

Belongs to the herpesviridae glycoprotein B family. As to quaternary structure, homotrimer; disulfide-linked. Binds to heparan sulfate proteoglycans. Interacts with gH/gL heterodimer. Post-translationally, a proteolytic cleavage by host furin generates two subunits that remain linked by disulfide bonds.

It localises to the virion membrane. The protein resides in the host cell membrane. Its subcellular location is the host endosome membrane. The protein localises to the host Golgi apparatus membrane. Functionally, envelope glycoprotein that forms spikes at the surface of virion envelope. Essential for the initial attachment to heparan sulfate moieties of the host cell surface proteoglycans. Involved in fusion of viral and cellular membranes leading to virus entry into the host cell. Following initial binding to its host receptors, membrane fusion is mediated by the fusion machinery composed at least of gB and the heterodimer gH/gL. May be involved in the fusion between the virion envelope and the outer nuclear membrane during virion egress. The polypeptide is Envelope glycoprotein B (Guinea pig cytomegalovirus (strain 22122) (GPCMV)).